A 359-amino-acid polypeptide reads, in one-letter code: Aromatic amino acid aminotransferase (359 aa).

Lys-223 carries the post-translational modification N6-(pyridoxal phosphate)lysine.

Belongs to the class-II pyridoxal-phosphate-dependent aminotransferase family. As to quaternary structure, homodimer. It depends on pyridoxal 5'-phosphate as a cofactor.

The catalysed reaction is an aromatic L-alpha-amino acid + 2-oxoglutarate = an aromatic oxo-acid + L-glutamate. In terms of biological role, aminotransferase that catalyzes the conversion of aromatic amino acids and 2-oxoglutarate into corresponding aromatic oxo acids and L-glutamate. The chain is Aromatic amino acid aminotransferase from Streptomyces avermitilis (strain ATCC 31267 / DSM 46492 / JCM 5070 / NBRC 14893 / NCIMB 12804 / NRRL 8165 / MA-4680).